The primary structure comprises 1419 residues: Formin-1 (1419 aa).

The microtubule-binding stretch occupies residues 1 to 622 (MEGTHCTLQL…TAEPQHQSPP (622 aa)). Disordered stretches follow at residues 138–194 (DWQG…MGKD), 262–331 (LGRE…KVVA), 343–641 (VVKT…TPKD), and 685–711 (SLTE…DTEE). Over residues 151 to 163 (RSTHGNKKPRRSS) the composition is skewed to basic residues. The segment covering 298–317 (SHQDPEKHPEAEKDEMEKPA) has biased composition (basic and acidic residues). The segment covering 394–411 (RSSQSPAGETASISSVSA) has biased composition (polar residues). The segment covering 425-438 (IESEKLDEAPEGKR) has biased composition (basic and acidic residues). Positions 456 to 842 (NKRRAGLPLG…LNISSLSQLS (387 aa)) are mediates interaction with alpha-catenin. The segment covering 504-517 (FNNSASQSSTHKQT) has biased composition (polar residues). Residues 520 to 529 (VPSPLSPRLP) show a composition bias toward pro residues. A compositionally biased stretch (polar residues) spans 614–623 (AEPQHQSPPG). Basic and acidic residues predominate over residues 685–694 (SLTEQDDRTP). Positions 720 to 774 (AEYQAAILHLKREHKEEIENLQAQFELRAFHIRGEHAMITARLEETIENLKHELE) form a coiled coil. Disordered stretches follow at residues 859–978 (GMAS…AIEP) and 1390–1419 (SEKK…VTTN). 2 stretches are compositionally biased toward pro residues: residues 868-882 (LPPP…PPLP) and 890-958 (PAPP…PPPG). In terms of domain architecture, FH1 spans 870–957 (PPPASIPPPP…PPGLAPPPPP (88 aa)). In terms of domain architecture, FH2 spans 972–1388 (RKPAIEPSCP…KMAQESVSKL (417 aa)).

The protein belongs to the formin homology family. Cappuccino subfamily. In terms of assembly, interacts with alpha-catenin and may interact with tubulin. In terms of processing, phosphorylated on serine and possibly threonine residues.

It localises to the nucleus. The protein localises to the cytoplasm. The protein resides in the cell junction. It is found in the adherens junction. Its subcellular location is the cell membrane. Functionally, plays a role in the formation of adherens junction and the polymerization of linear actin cables. The sequence is that of Formin-1 (FMN1) from Homo sapiens (Human).